Consider the following 246-residue polypeptide: Pyridoxine 5'-phosphate synthase (246 aa).

3-amino-2-oxopropyl phosphate contacts are provided by Asn8 and Arg19. The Proton acceptor role is filled by His44. Residues Arg46 and His51 each contribute to the 1-deoxy-D-xylulose 5-phosphate site. The Proton acceptor role is filled by Glu76. 1-deoxy-D-xylulose 5-phosphate is bound at residue Thr106. His198 serves as the catalytic Proton donor. 3-amino-2-oxopropyl phosphate contacts are provided by residues Asp199 and Gly221–His222.

Belongs to the PNP synthase family. In terms of assembly, homooctamer; tetramer of dimers.

The protein localises to the cytoplasm. It catalyses the reaction 3-amino-2-oxopropyl phosphate + 1-deoxy-D-xylulose 5-phosphate = pyridoxine 5'-phosphate + phosphate + 2 H2O + H(+). The protein operates within cofactor biosynthesis; pyridoxine 5'-phosphate biosynthesis; pyridoxine 5'-phosphate from D-erythrose 4-phosphate: step 5/5. Functionally, catalyzes the complicated ring closure reaction between the two acyclic compounds 1-deoxy-D-xylulose-5-phosphate (DXP) and 3-amino-2-oxopropyl phosphate (1-amino-acetone-3-phosphate or AAP) to form pyridoxine 5'-phosphate (PNP) and inorganic phosphate. This is Pyridoxine 5'-phosphate synthase from Mesorhizobium japonicum (strain LMG 29417 / CECT 9101 / MAFF 303099) (Mesorhizobium loti (strain MAFF 303099)).